Consider the following 562-residue polypeptide: Dihydroxy-acid dehydratase (562 aa).

Asp-80 contributes to the Mg(2+) binding site. Residue Cys-121 coordinates [2Fe-2S] cluster. Residues Asp-122 and Lys-123 each contribute to the Mg(2+) site. Lys-123 is subject to N6-carboxylysine. A [2Fe-2S] cluster-binding site is contributed by Cys-194. Glu-446 is a Mg(2+) binding site. Residue Ser-472 is the Proton acceptor of the active site.

This sequence belongs to the IlvD/Edd family. Homodimer. The cofactor is [2Fe-2S] cluster. Mg(2+) serves as cofactor.

It carries out the reaction (2R)-2,3-dihydroxy-3-methylbutanoate = 3-methyl-2-oxobutanoate + H2O. The catalysed reaction is (2R,3R)-2,3-dihydroxy-3-methylpentanoate = (S)-3-methyl-2-oxopentanoate + H2O. Its pathway is amino-acid biosynthesis; L-isoleucine biosynthesis; L-isoleucine from 2-oxobutanoate: step 3/4. It functions in the pathway amino-acid biosynthesis; L-valine biosynthesis; L-valine from pyruvate: step 3/4. Its function is as follows. Functions in the biosynthesis of branched-chain amino acids. Catalyzes the dehydration of (2R,3R)-2,3-dihydroxy-3-methylpentanoate (2,3-dihydroxy-3-methylvalerate) into 2-oxo-3-methylpentanoate (2-oxo-3-methylvalerate) and of (2R)-2,3-dihydroxy-3-methylbutanoate (2,3-dihydroxyisovalerate) into 2-oxo-3-methylbutanoate (2-oxoisovalerate), the penultimate precursor to L-isoleucine and L-valine, respectively. The polypeptide is Dihydroxy-acid dehydratase (Staphylococcus aureus (strain MRSA252)).